Consider the following 2265-residue polypeptide: Collagen alpha-6(VI) chain (2265 aa).

An N-terminal signal peptide occupies residues 1–18; that stretch reads MLLVLCLTMICFHVCVNQ. The nonhelical region stretch occupies residues 19–1390; that stretch reads DSGPEYADVV…TCCCLLCKCT (1372 aa). VWFA domains lie at 26–205, 228–406, 435–605, 621–790, 808–981, 999–1170, and 1186–1378; these read DVVF…IKDV, DVVF…LKKL, DIYL…RNQV, DIMF…EDDL, DVVF…FSDV, DLVF…KKRI, and DVVV…INVA. N-linked (GlcNAc...) asparagine glycosylation is found at Asn-197, Asn-238, and Asn-346. Asn-760 carries N-linked (GlcNAc...) asparagine glycosylation. Residues 1391–1724 are triple-helical region; sequence GGDGAMGDPG…GRKGVKGARG (334 aa). Residues 1398-1722 are disordered; the sequence is DPGSAGKKGP…PPGRKGVKGA (325 aa). The segment covering 1455 to 1470 has biased composition (acidic residues); sequence EEGEVGEDGLDGLDGE. Basic and acidic residues predominate over residues 1497–1507; the sequence is AAGDRGAKGLR. Positions 1507-1509 match the Cell attachment site motif; sequence RGD. The segment covering 1546–1558 has biased composition (basic residues); that stretch reads SRRKMVVHGRRGH. The segment at 1725–2265 is nonhelical region; it reads LASFSTCDLI…ATSKLGKRSA (541 aa). 2 VWFA domains span residues 1756–1936 and 1964–2165; these read ELVF…ERLQ and DTAF…INSI. The tract at residues 2186–2205 is disordered; that stretch reads SRDLKPPPRQFRSFVPGPQK.

Belongs to the type VI collagen family. As to quaternary structure, trimers composed of three different chains: alpha-1(VI), alpha-2(VI), and alpha-3(VI) or alpha-4(VI) or alpha-5(VI) or alpha-6(VI). In terms of processing, prolines at the third position of the tripeptide repeating unit (G-X-Y) are hydroxylated in some or all of the chains. In newborn, it is expressed in lung, heart, kidney, muscle, brain, intestine, skin, femur and sternum. In adult, it is expressed in lung, heart, muscle, ovary, brain, liver and sternum.

It is found in the secreted. Its subcellular location is the extracellular space. It localises to the extracellular matrix. Functionally, collagen VI acts as a cell-binding protein. This is Collagen alpha-6(VI) chain (Col6a6) from Mus musculus (Mouse).